A 748-amino-acid polypeptide reads, in one-letter code: Rho GTPase-activating protein 24 (748 aa).

One can recognise a PH domain in the interval 18–124; it reads NATKCGWLRK…WVKSIRRVIW (107 aa). Positions 134-328 constitute a Rho-GAP domain; the sequence is QKLEDTVRYE…VMISKHDRLF (195 aa). Residues 328-476 form a disordered region; sequence FPKDTEPQSK…SSGTKMGTHS (149 aa). 2 stretches are compositionally biased toward polar residues: residues 335–347 and 356–368; these read QSKP…SNNN and GQLQ…NTKE. 8 positions are modified to phosphoserine: Ser-369, Ser-391, Ser-396, Ser-398, Ser-402, Ser-413, Ser-415, and Ser-437. Over residues 369–381 the composition is skewed to basic and acidic residues; it reads SPVRRCSWDKPES. The segment covering 382 to 405 has biased composition (polar residues); it reads PQRSSMDNGSPTALSGSKTNSPRN. Positions 432–476 are enriched in polar residues; the sequence is IVTNGSFSSSNAEGVEKTQTTPNGSLQARRTSSLKSSGTKMGTHS. The residue at position 452 (Thr-452) is a Phosphothreonine. Ser-495 bears the Phosphoserine mark. The disordered stretch occupies residues 582–640; the sequence is DFYGGNFEDPVLDGPPQDDLSHPGDYENKSDRRSVGGRSSRATSSSDNSETFVGNTSSN. The span at 600-615 shows a compositional bias: basic and acidic residues; that stretch reads DLSHPGDYENKSDRRS. A compositionally biased stretch (low complexity) spans 617 to 630; it reads GGRSSRATSSSDNS. Residues 631–640 show a composition bias toward polar residues; the sequence is ETFVGNTSSN. The stretch at 649–729 forms a coiled coil; it reads SSLKQEMTKQ…KEMEQFFSTF (81 aa).

As to quaternary structure, interacts with FLNA. In terms of processing, phosphorylated by ROCK, leading to activate the RacGAP activity.

The protein localises to the cytoplasm. It is found in the cytoskeleton. It localises to the cell junction. Its subcellular location is the adherens junction. The protein resides in the focal adhesion. The protein localises to the cell projection. Rho GTPase-activating protein involved in cell polarity, cell morphology and cytoskeletal organization. Acts as a GTPase activator for the Rac-type GTPase by converting it to an inactive GDP-bound state. Controls actin remodeling by inactivating Rac downstream of Rho leading to suppress leading edge protrusion and promotes cell retraction to achieve cellular polarity. Able to suppress RAC1 and CDC42 activity in vitro. Overexpression induces cell rounding with partial or complete disruption of actin stress fibers and formation of membrane ruffles, lamellipodia, and filopodia. Isoform 2 is a vascular cell-specific GAP involved in modulation of angiogenesis. This Rattus norvegicus (Rat) protein is Rho GTPase-activating protein 24 (Arhgap24).